Here is a 216-residue protein sequence, read N- to C-terminus: Uracil phosphoribosyltransferase (216 aa).

Residues Arg-85, Arg-110, and 135–143 (DPMVATGYS) each bind 5-phospho-alpha-D-ribose 1-diphosphate. Uracil contacts are provided by residues Ile-200 and 205–207 (GDA). Asp-206 serves as a coordination point for 5-phospho-alpha-D-ribose 1-diphosphate.

It belongs to the UPRTase family. Requires Mg(2+) as cofactor.

The enzyme catalyses UMP + diphosphate = 5-phospho-alpha-D-ribose 1-diphosphate + uracil. The protein operates within pyrimidine metabolism; UMP biosynthesis via salvage pathway; UMP from uracil: step 1/1. With respect to regulation, allosterically activated by GTP. Functionally, catalyzes the conversion of uracil and 5-phospho-alpha-D-ribose 1-diphosphate (PRPP) to UMP and diphosphate. The sequence is that of Uracil phosphoribosyltransferase from Burkholderia mallei (strain NCTC 10247).